Here is a 146-residue protein sequence, read N- to C-terminus: Anti-sigma F factor (146 aa).

It belongs to the anti-sigma-factor family.

It catalyses the reaction L-seryl-[protein] + ATP = O-phospho-L-seryl-[protein] + ADP + H(+). The catalysed reaction is L-threonyl-[protein] + ATP = O-phospho-L-threonyl-[protein] + ADP + H(+). In terms of biological role, binds to sigma F and blocks its ability to form an RNA polymerase holoenzyme (E-sigma F). Phosphorylates SpoIIAA on a serine residue. This phosphorylation may enable SpoIIAA to act as an anti-anti-sigma factor that counteracts SpoIIAB and thus releases sigma F from inhibition. The protein is Anti-sigma F factor of Bacillus licheniformis (strain ATCC 14580 / DSM 13 / JCM 2505 / CCUG 7422 / NBRC 12200 / NCIMB 9375 / NCTC 10341 / NRRL NRS-1264 / Gibson 46).